The sequence spans 498 residues: Probable malate:quinone oxidoreductase (498 aa).

This sequence belongs to the MQO family. It depends on FAD as a cofactor.

The catalysed reaction is (S)-malate + a quinone = a quinol + oxaloacetate. It participates in carbohydrate metabolism; tricarboxylic acid cycle; oxaloacetate from (S)-malate (quinone route): step 1/1. This chain is Probable malate:quinone oxidoreductase, found in Prochlorococcus marinus (strain AS9601).